Here is a 274-residue protein sequence, read N- to C-terminus: Dermonecrotic toxin SdSicTox-betaIIB1ai (274 aa).

Residue His-5 is part of the active site. Residues Glu-25 and Asp-27 each coordinate Mg(2+). His-41 functions as the Nucleophile in the catalytic mechanism. Disulfide bonds link Cys-45/Cys-51 and Cys-47/Cys-190. Mg(2+) is bound at residue Asp-85.

This sequence belongs to the arthropod phospholipase D family. Class II subfamily. It depends on Mg(2+) as a cofactor. In terms of tissue distribution, expressed by the venom gland.

The protein localises to the secreted. It carries out the reaction an N-(acyl)-sphingosylphosphocholine = an N-(acyl)-sphingosyl-1,3-cyclic phosphate + choline. The enzyme catalyses an N-(acyl)-sphingosylphosphoethanolamine = an N-(acyl)-sphingosyl-1,3-cyclic phosphate + ethanolamine. The catalysed reaction is a 1-acyl-sn-glycero-3-phosphocholine = a 1-acyl-sn-glycero-2,3-cyclic phosphate + choline. It catalyses the reaction a 1-acyl-sn-glycero-3-phosphoethanolamine = a 1-acyl-sn-glycero-2,3-cyclic phosphate + ethanolamine. In terms of biological role, dermonecrotic toxins cleave the phosphodiester linkage between the phosphate and headgroup of certain phospholipids (sphingolipid and lysolipid substrates), forming an alcohol (often choline) and a cyclic phosphate. This toxin acts on sphingomyelin (SM). It may also act on ceramide phosphoethanolamine (CPE), lysophosphatidylcholine (LPC) and lysophosphatidylethanolamine (LPE), but not on lysophosphatidylserine (LPS), and lysophosphatidylglycerol (LPG). It acts by transphosphatidylation, releasing exclusively cyclic phosphate products as second products. Induces dermonecrosis, hemolysis, increased vascular permeability, edema, inflammatory response, and platelet aggregation. The sequence is that of Dermonecrotic toxin SdSicTox-betaIIB1ai from Sicarius cf. damarensis (strain GJB-2008) (Six-eyed sand spider).